We begin with the raw amino-acid sequence, 313 residues long: tRNA dimethylallyltransferase (313 aa).

ATP is bound at residue 9 to 16 (GPTAVGKT). 11–16 (TAVGKT) contacts substrate. The interval 34–37 (DSMQ) is interaction with substrate tRNA.

Belongs to the IPP transferase family. Monomer. Requires Mg(2+) as cofactor.

The enzyme catalyses adenosine(37) in tRNA + dimethylallyl diphosphate = N(6)-dimethylallyladenosine(37) in tRNA + diphosphate. Functionally, catalyzes the transfer of a dimethylallyl group onto the adenine at position 37 in tRNAs that read codons beginning with uridine, leading to the formation of N6-(dimethylallyl)adenosine (i(6)A). The sequence is that of tRNA dimethylallyltransferase from Lachnoclostridium phytofermentans (strain ATCC 700394 / DSM 18823 / ISDg) (Clostridium phytofermentans).